The following is a 152-amino-acid chain: Transcriptional repressor NrdR (152 aa).

The segment at 3 to 34 (CPKCGSLNDKVVDTRQSKDGTVIRRRRECLDC) is a zinc-finger region. One can recognise an ATP-cone domain in the interval 49–139 (IVVKKKNGTT…VYNEFQDIKD (91 aa)).

It belongs to the NrdR family. Zn(2+) serves as cofactor.

In terms of biological role, negatively regulates transcription of bacterial ribonucleotide reductase nrd genes and operons by binding to NrdR-boxes. This Persephonella marina (strain DSM 14350 / EX-H1) protein is Transcriptional repressor NrdR.